The chain runs to 153 residues: MNFEGKLVGKDLKIAIVVSRFNDFITTRLLEGAKDTLIRHEVEDTNIDVAYVPGAFEIPLVAKKLAQKGEYDAVITLGCVIRGATSHYDYVCNEVAKGVSKANDISDTPVIFGVLTTESIEQAVERAGTKAGNKGSEAAVSAIEMANLIKQIN.

5-amino-6-(D-ribitylamino)uracil-binding positions include phenylalanine 21, 55–57, and 79–81; these read AFE and CVI. 84–85 lines the (2S)-2-hydroxy-3-oxobutyl phosphate pocket; the sequence is AT. The active-site Proton donor is histidine 87. Phenylalanine 112 provides a ligand contact to 5-amino-6-(D-ribitylamino)uracil. Position 126 (arginine 126) interacts with (2S)-2-hydroxy-3-oxobutyl phosphate.

The protein belongs to the DMRL synthase family. As to quaternary structure, forms an icosahedral capsid composed of 60 subunits, arranged as a dodecamer of pentamers.

The catalysed reaction is (2S)-2-hydroxy-3-oxobutyl phosphate + 5-amino-6-(D-ribitylamino)uracil = 6,7-dimethyl-8-(1-D-ribityl)lumazine + phosphate + 2 H2O + H(+). The protein operates within cofactor biosynthesis; riboflavin biosynthesis; riboflavin from 2-hydroxy-3-oxobutyl phosphate and 5-amino-6-(D-ribitylamino)uracil: step 1/2. In terms of biological role, catalyzes the formation of 6,7-dimethyl-8-ribityllumazine by condensation of 5-amino-6-(D-ribitylamino)uracil with 3,4-dihydroxy-2-butanone 4-phosphate. This is the penultimate step in the biosynthesis of riboflavin. The polypeptide is 6,7-dimethyl-8-ribityllumazine synthase (Staphylococcus epidermidis (strain ATCC 35984 / DSM 28319 / BCRC 17069 / CCUG 31568 / BM 3577 / RP62A)).